The following is a 101-amino-acid chain: Small ribosomal subunit protein uS14 (101 aa).

It belongs to the universal ribosomal protein uS14 family. As to quaternary structure, part of the 30S ribosomal subunit. Contacts proteins S3 and S10.

Functionally, binds 16S rRNA, required for the assembly of 30S particles and may also be responsible for determining the conformation of the 16S rRNA at the A site. In Methylobacterium sp. (strain 4-46), this protein is Small ribosomal subunit protein uS14.